Reading from the N-terminus, the 428-residue chain is Flotillin-2 (428 aa).

S-palmitoyl cysteine attachment occurs at residues Cys4, Cys19, and Cys20.

It belongs to the band 7/mec-2 family. Flotillin subfamily. As to quaternary structure, heterooligomeric complex of flotillins 1 and 2. Palmitoylation may be required for the formation of higher order complexes and for neurite outgrowth in cultured neural stem cells. Normally expressed in growing retinal exons of newly differentiated ganglion cells at the retinal margin. After optic nerve injury, expressed in all retinal ganglion cells and retinal axons. Also expressed in endothelial cells, spinal cord, larval and adult skin, muscle processes, thymus and gill macrophages.

It is found in the membrane. Its subcellular location is the endosome. Functionally, may play a role in axon growth and regeneration. May be involved in epidermal cell adhesion and epidermal structure and function. In Carassius auratus (Goldfish), this protein is Flotillin-2 (flot2).